Reading from the N-terminus, the 85-residue chain is Growth factor (85 aa).

An N-terminal signal peptide occupies residues 1–19; it reads MVPRDLVATLLCAMCIVQA. The region spanning 33–77 is the EGF-like domain; the sequence is RIKLCNDDYKNYCLNNGTCFTVALNNVSLNPFCACHINYVGSRCQ. 3 disulfides stabilise this stretch: cysteine 37–cysteine 51, cysteine 45–cysteine 65, and cysteine 67–cysteine 76. Residues asparagine 48 and asparagine 58 are each glycosylated (N-linked (GlcNAc...) asparagine; by host).

The protein resides in the secreted. Stimulates the growth of some tissues. The sequence is that of Growth factor (MGF) from Oryctolagus cuniculus (Rabbit).